Here is a 333-residue protein sequence, read N- to C-terminus: MKKIAIDLMGGDFAPAEILAGALSFAKDFKDVELYLVGIEDNFKNVSLPENCKKVTVEDYLPMDIKPTEALRRKKSTMYQSCKLVKENVVDAVVSAGNTGALLACATFVVGRMKNIERPTLAVPIPTKDGFCVLADAGANIDVKPSTLLQFGVMGVEYAKFLGIKNPKVGLLNVGTEENKGTQKEQEAFKLLKEHFKKNFMGNVEGNDINMGKVDVVVADGFHGNIAMKTMEGTAKLIVDVLKSNIKKNIISAIGALLMKSVFNRLKEKLDPRKYGGTFFVGVNGIVVKAHGNSDRIAIYHALKVAKDGIEASLTSNIEEAIRNVWNSRYGRD.

This sequence belongs to the PlsX family. As to quaternary structure, homodimer. Probably interacts with PlsY.

It localises to the cytoplasm. It catalyses the reaction a fatty acyl-[ACP] + phosphate = an acyl phosphate + holo-[ACP]. It participates in lipid metabolism; phospholipid metabolism. Functionally, catalyzes the reversible formation of acyl-phosphate (acyl-PO(4)) from acyl-[acyl-carrier-protein] (acyl-ACP). This enzyme utilizes acyl-ACP as fatty acyl donor, but not acyl-CoA. The sequence is that of Phosphate acyltransferase from Thermosipho melanesiensis (strain DSM 12029 / CIP 104789 / BI429).